The chain runs to 2217 residues: Protein irg-7 (2217 aa).

The N-terminal stretch at 1 to 16 (MRNWVLIAALAVICLA) is a signal peptide. 2 EGF-like domains span residues 370–405 (SGST…FHCQ) and 864–896 (TGTY…ESCE). Disulfide bonds link Cys-379/Cys-393, Cys-395/Cys-404, Cys-868/Cys-873, Cys-886/Cys-895, Cys-1212/Cys-1312, Cys-1285/Cys-1304, Cys-1508/Cys-1521, and Cys-1523/Cys-1532. In terms of domain architecture, C-type lectin spans 1188 to 1313 (IGQYCIKFMA…CAEPRAFACQ (126 aa)). Residues 1499–1533 (TGSRCTVPICVNGGTRNPDEATCSCPDGYEGPNCQ) form the EGF-like 3 domain. Positions 2016-2202 (DVVFMIDGSQ…NNQIKTIQQL (187 aa)) constitute a VWFA domain.

It localises to the secreted. Its function is as follows. Plays a role in innate immunity, probably via the atf-7 pathway, to confer resistance to pathogenic bacteria. May also play a role in the regulation of longevity. In Caenorhabditis elegans, this protein is Protein irg-7.